The following is a 571-amino-acid chain: Potassium-transporting ATPase potassium-binding subunit (571 aa).

11 helical membrane passes run 5-25 (GWTQ…PLGW), 64-84 (LGYA…LYAI), 136-156 (GLTH…VALI), 178-198 (ILYV…WQGI), 254-274 (LSNF…TNVF), 285-305 (WAIL…AYWA), 330-350 (FDIA…CGAV), 357-379 (FTAL…IGGV), 421-441 (MLGI…ATVL), 488-508 (LAVG…AIAG), and 527-547 (GALF…LTFF).

Belongs to the KdpA family. In terms of assembly, the system is composed of three essential subunits: KdpA, KdpB and KdpC.

It is found in the cell inner membrane. Functionally, part of the high-affinity ATP-driven potassium transport (or Kdp) system, which catalyzes the hydrolysis of ATP coupled with the electrogenic transport of potassium into the cytoplasm. This subunit binds the periplasmic potassium ions and delivers the ions to the membrane domain of KdpB through an intramembrane tunnel. This chain is Potassium-transporting ATPase potassium-binding subunit, found in Methylobacterium nodulans (strain LMG 21967 / CNCM I-2342 / ORS 2060).